Reading from the N-terminus, the 569-residue chain is Urease subunit beta (569 aa).

In terms of domain architecture, Urease spans 131–569; sequence GGIDTHIHFI…VSLAQLFSIF (439 aa). 3 residues coordinate Ni(2+): His136, His138, and Lys219. Lys219 carries the N6-carboxylysine modification. His221 provides a ligand contact to substrate. Ni(2+)-binding residues include His248 and His274. The active-site Proton donor is the His322. Asp362 is a Ni(2+) binding site.

This sequence belongs to the metallo-dependent hydrolases superfamily. Urease alpha subunit family. In terms of assembly, heterohexamer of 3 UreA (alpha) and 3 UreB (beta) subunits. Four heterohexamers assemble to form a 16 nm dodecameric complex. Ni cation is required as a cofactor. Post-translationally, carboxylation allows a single lysine to coordinate two nickel ions.

The protein localises to the cytoplasm. It carries out the reaction urea + 2 H2O + H(+) = hydrogencarbonate + 2 NH4(+). Its pathway is nitrogen metabolism; urea degradation; CO(2) and NH(3) from urea (urease route): step 1/1. In terms of biological role, ammonia produced by ureolysis increases the gastric pH thereby providing an environment permissive for colonization of the stomach. The protein is Urease subunit beta of Helicobacter pylori (strain J99 / ATCC 700824) (Campylobacter pylori J99).